We begin with the raw amino-acid sequence, 190 residues long: Ribonuclease HII (190 aa).

Residues 1–190 enclose the RNase H type-2 domain; sequence MAGVDEVGRG…FCRKIIENPD (190 aa). Positions 5, 6, and 101 each coordinate a divalent metal cation.

This sequence belongs to the RNase HII family. The cofactor is Mn(2+). Requires Mg(2+) as cofactor.

Its subcellular location is the cytoplasm. It carries out the reaction Endonucleolytic cleavage to 5'-phosphomonoester.. Endonuclease that specifically degrades the RNA of RNA-DNA hybrids. In Synechocystis sp. (strain ATCC 27184 / PCC 6803 / Kazusa), this protein is Ribonuclease HII (rnhB).